Reading from the N-terminus, the 507-residue chain is MSTDGESPEEPRWKAVASPKASTMPEKRGSAQAASGSWLQGFGHPSVYHAAFVIFLEFFAWGLLTTPMLTVLHETFPQHTFLMNGLIQGVKGLLSFLSAPLIGALSDVWGRKPFLLGTVFFTCFPIPLMRINPWWYFGMISVSGVFSVTFSVIFAYVADFTQEHERSTAYGWVSATFAASLVSSPAIGTYLSANYGDSLVVLVATLVALLDICFILIAVPESLSEKIRPASWGAQISWKQADPFASLKKVGKDSTVLLICITVFLSYLPEAGQYSSFFLYLRQVIGFGSVKIVAFIAMVGILSIVAQTVFLSKLMRSLGNKNTVLLGLGFQMLQLAWYGFGSQAWMMWAAGTVAAMSSITFPAVSALISRNAESDQQGVAQGIVTGIRGLCNGLGPALYGFIFYMFHVELSELGPKLNSDDDPLQGAFIPGPPFLFGACIVLMSFLVALFIPEYRKTSGVQKHNNSTSGSLSTPPERGSDEDIEPLLQDSSIWELSFEEPGNQCTEL.

The tract at residues 1-27 (MSTDGESPEEPRWKAVASPKASTMPEK) is disordered. Residues 1–51 (MSTDGESPEEPRWKAVASPKASTMPEKRGSAQAASGSWLQGFGHPSVYHAA) lie on the Extracellular side of the membrane. Residues 52–72 (FVIFLEFFAWGLLTTPMLTVL) form a helical membrane-spanning segment. Residues 73–84 (HETFPQHTFLMN) are Cytoplasmic-facing. A helical transmembrane segment spans residues 85 to 105 (GLIQGVKGLLSFLSAPLIGAL). The Extracellular segment spans residues 106-113 (SDVWGRKP). The helical transmembrane segment at 114-134 (FLLGTVFFTCFPIPLMRINPW) threads the bilayer. The Cytoplasmic portion of the chain corresponds to 135–136 (WY). The chain crosses the membrane as a helical span at residues 137 to 157 (FGMISVSGVFSVTFSVIFAYV). Residues 158–170 (ADFTQEHERSTAY) lie on the Extracellular side of the membrane. The helical transmembrane segment at 171 to 191 (GWVSATFAASLVSSPAIGTYL) threads the bilayer. Residues 192–198 (SANYGDS) lie on the Cytoplasmic side of the membrane. The chain crosses the membrane as a helical span at residues 199–219 (LVVLVATLVALLDICFILIAV). Topologically, residues 220–257 (PESLSEKIRPASWGAQISWKQADPFASLKKVGKDSTVL) are extracellular. A helical membrane pass occupies residues 258–278 (LICITVFLSYLPEAGQYSSFF). The Cytoplasmic portion of the chain corresponds to 279 to 283 (LYLRQ). A helical membrane pass occupies residues 284 to 304 (VIGFGSVKIVAFIAMVGILSI). The Extracellular portion of the chain corresponds to 305-323 (VAQTVFLSKLMRSLGNKNT). The helical transmembrane segment at 324–344 (VLLGLGFQMLQLAWYGFGSQA) threads the bilayer. At 345-347 (WMM) the chain is on the cytoplasmic side. Residues 348 to 368 (WAAGTVAAMSSITFPAVSALI) traverse the membrane as a helical segment. Topologically, residues 369–389 (SRNAESDQQGVAQGIVTGIRG) are extracellular. The helical transmembrane segment at 390–410 (LCNGLGPALYGFIFYMFHVEL) threads the bilayer. The Cytoplasmic portion of the chain corresponds to 411–430 (SELGPKLNSDDDPLQGAFIP). A helical transmembrane segment spans residues 431 to 451 (GPPFLFGACIVLMSFLVALFI). Topologically, residues 452–507 (PEYRKTSGVQKHNNSTSGSLSTPPERGSDEDIEPLLQDSSIWELSFEEPGNQCTEL) are extracellular. The segment covering 459-473 (GVQKHNNSTSGSLST) has biased composition (polar residues). Positions 459–483 (GVQKHNNSTSGSLSTPPERGSDEDI) are disordered. N-linked (GlcNAc...) asparagine glycans are attached at residues Asn464 and Asn465.

It belongs to the major facilitator superfamily.

Its subcellular location is the membrane. The protein is Hippocampus abundant transcript-like protein 1 of Mus musculus (Mouse).